Consider the following 132-residue polypeptide: Small ribosomal subunit protein uS11 (132 aa).

This sequence belongs to the universal ribosomal protein uS11 family. As to quaternary structure, part of the 30S ribosomal subunit. Interacts with proteins S7 and S18. Binds to IF-3.

In terms of biological role, located on the platform of the 30S subunit, it bridges several disparate RNA helices of the 16S rRNA. Forms part of the Shine-Dalgarno cleft in the 70S ribosome. The chain is Small ribosomal subunit protein uS11 from Chlamydia caviae (strain ATCC VR-813 / DSM 19441 / 03DC25 / GPIC) (Chlamydophila caviae).